The sequence spans 198 residues: Large ribosomal subunit protein bL9 (198 aa).

Residues 156 to 166 (RGEDISTRQED) show a composition bias toward basic and acidic residues. Positions 156–198 (RGEDISTRQEDQDAAAEALAAAGEFFDPEAHNDGEQEEEAGDK) are disordered.

The protein belongs to the bacterial ribosomal protein bL9 family.

Its function is as follows. Binds to the 23S rRNA. This chain is Large ribosomal subunit protein bL9, found in Rhodopseudomonas palustris (strain BisB18).